The chain runs to 114 residues: T cell receptor beta variable 10-3 (114 aa).

A signal peptide spans 1–21 (MGTRLFFYVALCLLWTGHMDA). The 93-residue stretch at 22 to 114 (GITQSPRHKV…TSVYFCAISE (93 aa)) folds into the Ig-like domain. Cysteines 42 and 110 form a disulfide.

In terms of assembly, alpha-beta TR is a heterodimer composed of an alpha and beta chain; disulfide-linked. The alpha-beta TR is associated with the transmembrane signaling CD3 coreceptor proteins to form the TR-CD3 (TcR or TCR). The assembly of alpha-beta TR heterodimers with CD3 occurs in the endoplasmic reticulum where a single alpha-beta TR heterodimer associates with one CD3D-CD3E heterodimer, one CD3G-CD3E heterodimer and one CD247 homodimer forming a stable octameric structure. CD3D-CD3E and CD3G-CD3E heterodimers preferentially associate with TR alpha and TR beta chains, respectively. The association of the CD247 homodimer is the last step of TcR assembly in the endoplasmic reticulum and is required for transport to the cell surface.

The protein localises to the cell membrane. V region of the variable domain of T cell receptor (TR) beta chain that participates in the antigen recognition. Alpha-beta T cell receptors are antigen specific receptors which are essential to the immune response and are present on the cell surface of T lymphocytes. Recognize peptide-major histocompatibility (MH) (pMH) complexes that are displayed by antigen presenting cells (APC), a prerequisite for efficient T cell adaptive immunity against pathogens. Binding of alpha-beta TR to pMH complex initiates TR-CD3 clustering on the cell surface and intracellular activation of LCK that phosphorylates the ITAM motifs of CD3G, CD3D, CD3E and CD247 enabling the recruitment of ZAP70. In turn ZAP70 phosphorylates LAT, which recruits numerous signaling molecules to form the LAT signalosome. The LAT signalosome propagates signal branching to three major signaling pathways, the calcium, the mitogen-activated protein kinase (MAPK) kinase and the nuclear factor NF-kappa-B (NF-kB) pathways, leading to the mobilization of transcription factors that are critical for gene expression and essential for T cell growth and differentiation. The T cell repertoire is generated in the thymus, by V-(D)-J rearrangement. This repertoire is then shaped by intrathymic selection events to generate a peripheral T cell pool of self-MH restricted, non-autoaggressive T cells. Post-thymic interaction of alpha-beta TR with the pMH complexes shapes TR structural and functional avidity. In Homo sapiens (Human), this protein is T cell receptor beta variable 10-3.